The chain runs to 122 residues: MIQMQSKLDVADNTGARSVMCIKVLGGSKRRYASIGDIIKVTVKDAAPRGRVKKGDVYNAVVVRTAKGVRRPDGSLVKFDNNAAVLLNNKLEPIGTRIFGPVTRELRSERFMKIVSLAPEVL.

Belongs to the universal ribosomal protein uL14 family. As to quaternary structure, part of the 50S ribosomal subunit. Forms a cluster with proteins L3 and L19. In the 70S ribosome, L14 and L19 interact and together make contacts with the 16S rRNA in bridges B5 and B8.

Its function is as follows. Binds to 23S rRNA. Forms part of two intersubunit bridges in the 70S ribosome. The sequence is that of Large ribosomal subunit protein uL14 from Azoarcus sp. (strain BH72).